The chain runs to 298 residues: Pyridoxal kinase PdxY (298 aa).

Residue S17 participates in substrate binding. ATP-binding residues include D119 and E156. Position 234 (D234) interacts with substrate.

This sequence belongs to the pyridoxine kinase family. PdxY subfamily. In terms of assembly, homodimer. The cofactor is Mg(2+).

The enzyme catalyses pyridoxal + ATP = pyridoxal 5'-phosphate + ADP + H(+). Its pathway is cofactor metabolism; pyridoxal 5'-phosphate salvage; pyridoxal 5'-phosphate from pyridoxal: step 1/1. In terms of biological role, pyridoxal kinase involved in the salvage pathway of pyridoxal 5'-phosphate (PLP). Catalyzes the phosphorylation of pyridoxal to PLP. The polypeptide is Pyridoxal kinase PdxY (Deinococcus radiodurans (strain ATCC 13939 / DSM 20539 / JCM 16871 / CCUG 27074 / LMG 4051 / NBRC 15346 / NCIMB 9279 / VKM B-1422 / R1)).